The sequence spans 365 residues: Neutral protease 2 homolog mep20 (365 aa).

Positions 1–19 (MKVTILASAILALINGALA) are cleaved as a signal peptide. The propeptide occupies 20–172 (LPANTPTLDV…PQAIKLLDRR (153 aa)). Asn73 carries an N-linked (GlcNAc...) asparagine glycan. 2 cysteine pairs are disulfide-bonded: Cys178-Cys249 and Cys256-Cys274. A Zn(2+)-binding site is contributed by His299. Residue Glu300 is part of the active site. The Zn(2+) site is built by His303 and Asp314. N-linked (GlcNAc...) asparagine glycosylation is present at Asn351.

This sequence belongs to the peptidase M35 family. The cofactor is Zn(2+).

The protein resides in the secreted. The catalysed reaction is Preferential cleavage of bonds with hydrophobic residues in P1'. Also 3-Asn-|-Gln-4 and 8-Gly-|-Ser-9 bonds in insulin B chain.. In terms of biological role, secreted metalloproteinase that allows assimilation of proteinaceous substrates. Shows high activities on basic nuclear substrates such as histone and protamine. May be involved in virulence. The sequence is that of Neutral protease 2 homolog mep20 (mep20) from Aspergillus fumigatus (Neosartorya fumigata).